A 37-amino-acid chain; its full sequence is Large ribosomal subunit protein bL36 (37 aa).

Belongs to the bacterial ribosomal protein bL36 family.

In Acidothermus cellulolyticus (strain ATCC 43068 / DSM 8971 / 11B), this protein is Large ribosomal subunit protein bL36.